A 150-amino-acid chain; its full sequence is D-aminoacyl-tRNA deacylase (150 aa).

A Gly-cisPro motif, important for rejection of L-amino acids motif is present at residues 137–138; it reads GP.

This sequence belongs to the DTD family. In terms of assembly, homodimer.

The protein resides in the cytoplasm. It catalyses the reaction glycyl-tRNA(Ala) + H2O = tRNA(Ala) + glycine + H(+). The catalysed reaction is a D-aminoacyl-tRNA + H2O = a tRNA + a D-alpha-amino acid + H(+). Its function is as follows. An aminoacyl-tRNA editing enzyme that deacylates mischarged D-aminoacyl-tRNAs. Also deacylates mischarged glycyl-tRNA(Ala), protecting cells against glycine mischarging by AlaRS. Acts via tRNA-based rather than protein-based catalysis; rejects L-amino acids rather than detecting D-amino acids in the active site. By recycling D-aminoacyl-tRNA to D-amino acids and free tRNA molecules, this enzyme counteracts the toxicity associated with the formation of D-aminoacyl-tRNA entities in vivo and helps enforce protein L-homochirality. The protein is D-aminoacyl-tRNA deacylase of Geotalea daltonii (strain DSM 22248 / JCM 15807 / FRC-32) (Geobacter daltonii).